The chain runs to 598 residues: Protein VASCULAR ASSOCIATED DEATH 1, chloroplastic (598 aa).

Over residues 1–11 (MAMLSTASVSG) the composition is skewed to polar residues. The interval 1–64 (MAMLSTASVS…PSRGGDNQSE (64 aa)) is disordered. A chloroplast-targeting transit peptide spans 1-68 (MAMLSTASVS…GDNQSEVISK (68 aa)). Asn-61 is a glycosylation site (N-linked (GlcNAc...) asparagine). Positions 70–134 (EEYRQLFRLP…PFAEISCVKR (65 aa)) constitute a GRAM domain. In terms of domain architecture, VASt spans 272-444 (DFTKVAEAKF…MAHELLKQKK (173 aa)). Asn-329 and Asn-494 each carry an N-linked (GlcNAc...) asparagine glycan. Residues 507–527 (QVIVLAFAVILLMQVTIVVLL) form a helical membrane-spanning segment. Residues 553–595 (WLEKRMHFLREEMMMVEDRLQRMRQDHAALKAQFHHLERLLRR) are a coiled coil.

The protein resides in the membrane. It localises to the plastid. It is found in the chloroplast. Its function is as follows. Involved in ethylene- and salicylic acid-dependent cell death control associated with cells in the vicinity of vascular bundles. The protein is Protein VASCULAR ASSOCIATED DEATH 1, chloroplastic of Arabidopsis thaliana (Mouse-ear cress).